Consider the following 384-residue polypeptide: Chaperone protein DnaJ (384 aa).

The region spanning 5–70 is the J domain; that stretch reads DFYEVLGVSK…DKKAAYDRYG (66 aa). Residues 143–221 form a CR-type zinc finger; the sequence is GAQKTITVPG…CHGSGRIEKE (79 aa). Residues Cys-156, Cys-159, Cys-173, Cys-176, Cys-195, Cys-198, Cys-209, and Cys-212 each contribute to the Zn(2+) site. 4 CXXCXGXG motif repeats span residues 156–163, 173–180, 195–202, and 209–216; these read CGSCNGTG, CPTCSGLG, CPTCGGQG, and CRVCHGSG.

Belongs to the DnaJ family. In terms of assembly, homodimer. Zn(2+) is required as a cofactor.

It localises to the cytoplasm. Its function is as follows. Participates actively in the response to hyperosmotic and heat shock by preventing the aggregation of stress-denatured proteins and by disaggregating proteins, also in an autonomous, DnaK-independent fashion. Unfolded proteins bind initially to DnaJ; upon interaction with the DnaJ-bound protein, DnaK hydrolyzes its bound ATP, resulting in the formation of a stable complex. GrpE releases ADP from DnaK; ATP binding to DnaK triggers the release of the substrate protein, thus completing the reaction cycle. Several rounds of ATP-dependent interactions between DnaJ, DnaK and GrpE are required for fully efficient folding. Also involved, together with DnaK and GrpE, in the DNA replication of plasmids through activation of initiation proteins. The polypeptide is Chaperone protein DnaJ (Rhodobacter capsulatus (Rhodopseudomonas capsulata)).